Reading from the N-terminus, the 295-residue chain is MSERLSGHTLLISLIATPIRHSLSPKMHNEAFAKLGLDYAYLAFEVGNEELADAVQGIRALGIRGSNVSMPNKQAIIPYLDEISPAAELVGAVNTVVNKDGKGHLVGHVTDGTGAVRALAEEGVDIKDQIITLSGAGGAGTAIAVQLGLDGAKEVRIFNQKDAAFANAEKTVEKINSRTQTKASLTDLADQEAFKKSIAESSIYIDATGVGMKPLEDMSLITDPEVIRPDLVVFDVVYSPAETKLLKFAKEHGAKKAINGLGMMLYQGAEAFKLFTGEDMPVDYIKDLLFNDQDK.

Residues 22-24 (SLS) and serine 69 contribute to the shikimate site. The active-site Proton acceptor is the lysine 73. Shikimate-binding residues include asparagine 94 and aspartate 111. NADP(+) contacts are provided by residues 135 to 139 (GAGGA) and valine 236. Residue tyrosine 238 coordinates shikimate. An NADP(+)-binding site is contributed by glycine 260.

The protein belongs to the shikimate dehydrogenase family. Homodimer.

The catalysed reaction is shikimate + NADP(+) = 3-dehydroshikimate + NADPH + H(+). It functions in the pathway metabolic intermediate biosynthesis; chorismate biosynthesis; chorismate from D-erythrose 4-phosphate and phosphoenolpyruvate: step 4/7. Functionally, involved in the biosynthesis of the chorismate, which leads to the biosynthesis of aromatic amino acids. Catalyzes the reversible NADPH linked reduction of 3-dehydroshikimate (DHSA) to yield shikimate (SA). The protein is Shikimate dehydrogenase (NADP(+)) of Streptococcus uberis (strain ATCC BAA-854 / 0140J).